We begin with the raw amino-acid sequence, 333 residues long: Beta-ketoacyl-[acyl-carrier-protein] synthase III (333 aa).

Residues cysteine 112 and histidine 255 contribute to the active site. Residues 256-260 (QANQR) form an ACP-binding region. Asparagine 285 is an active-site residue.

Belongs to the thiolase-like superfamily. FabH family. In terms of assembly, homodimer.

It is found in the cytoplasm. It catalyses the reaction malonyl-[ACP] + acetyl-CoA + H(+) = 3-oxobutanoyl-[ACP] + CO2 + CoA. It participates in lipid metabolism; fatty acid biosynthesis. Catalyzes the condensation reaction of fatty acid synthesis by the addition to an acyl acceptor of two carbons from malonyl-ACP. Catalyzes the first condensation reaction which initiates fatty acid synthesis and may therefore play a role in governing the total rate of fatty acid production. Possesses both acetoacetyl-ACP synthase and acetyl transacylase activities. Its substrate specificity determines the biosynthesis of branched-chain and/or straight-chain of fatty acids. The protein is Beta-ketoacyl-[acyl-carrier-protein] synthase III of Synechococcus sp. (strain RCC307).